The primary structure comprises 326 residues: Olfactory receptor 11H12 (326 aa).

Residues 1-44 (MCPLTLQVTGLMNVSEPNSSFAFVNEFILQGFTCEWTIQIFLFS) are Extracellular-facing. Residues N13 and N18 are each glycosylated (N-linked (GlcNAc...) asparagine). A helical membrane pass occupies residues 45 to 65 (LFTTTYALTITGNGAIAFVLW). The Cytoplasmic segment spans residues 66 to 72 (CDWRLHT). A helical membrane pass occupies residues 73-93 (PMYMFLGNFSFLEIWYVSSTV). The Extracellular segment spans residues 94–112 (PKMLVNFLSEKKNISFAGC). N106 is a glycosylation site (N-linked (GlcNAc...) asparagine). An intrachain disulfide couples C112 to C194. A helical membrane pass occupies residues 113-133 (FLQFYFFFSLGTSECLLLTVM). Residues 134 to 158 (AFDQYLAICRPLLYPNIMTGHLCAK) are Cytoplasmic-facing. Residues 159 to 179 (LVILCWVCGFLWFLIPIVLIS) form a helical membrane-spanning segment. Topologically, residues 180–216 (QMPFCGPNIIDHVVCDPGPRFALDCVSAPRIQLFCYT) are extracellular. A helical membrane pass occupies residues 217-237 (LSSLVIFGNFLFIIGSYTLVL). The Cytoplasmic portion of the chain corresponds to 238 to 259 (KAVLGMPSSTGRHKAFSTCGSH). The chain crosses the membrane as a helical span at residues 260-280 (LAVVSLCYSSLMVMYVSPGLG). The Extracellular portion of the chain corresponds to 281–287 (HSTGMQK). Residues 288–308 (IETLFYAMVTPLFNPLIYSLQ) traverse the membrane as a helical segment. Over 309–326 (NKEIKAALRKVLGSSNII) the chain is Cytoplasmic.

The protein belongs to the G-protein coupled receptor 1 family.

It localises to the cell membrane. In terms of biological role, odorant receptor. The sequence is that of Olfactory receptor 11H12 (OR11H12) from Homo sapiens (Human).